Consider the following 240-residue polypeptide: Phosphoribosylaminoimidazole-succinocarboxamide synthase (240 aa).

This sequence belongs to the SAICAR synthetase family.

The catalysed reaction is 5-amino-1-(5-phospho-D-ribosyl)imidazole-4-carboxylate + L-aspartate + ATP = (2S)-2-[5-amino-1-(5-phospho-beta-D-ribosyl)imidazole-4-carboxamido]succinate + ADP + phosphate + 2 H(+). It functions in the pathway purine metabolism; IMP biosynthesis via de novo pathway; 5-amino-1-(5-phospho-D-ribosyl)imidazole-4-carboxamide from 5-amino-1-(5-phospho-D-ribosyl)imidazole-4-carboxylate: step 1/2. The chain is Phosphoribosylaminoimidazole-succinocarboxamide synthase from Wolbachia sp. subsp. Drosophila simulans (strain wRi).